We begin with the raw amino-acid sequence, 360 residues long: Endolytic murein transglycosylase (360 aa).

A helical transmembrane segment spans residues 16–36; sequence IILSSIVVLFLIIGGAFLYGK.

It belongs to the transglycosylase MltG family.

It localises to the cell membrane. It catalyses the reaction a peptidoglycan chain = a peptidoglycan chain with N-acetyl-1,6-anhydromuramyl-[peptide] at the reducing end + a peptidoglycan chain with N-acetylglucosamine at the non-reducing end.. Its function is as follows. Functions as a peptidoglycan terminase that cleaves nascent peptidoglycan strands endolytically to terminate their elongation. The polypeptide is Endolytic murein transglycosylase (Bacillus subtilis (strain 168)).